We begin with the raw amino-acid sequence, 356 residues long: Glutamine synthetase PR-2 (356 aa).

The 81-residue stretch at 19–99 (IIAEYIWVGG…VICDVYTPAG (81 aa)) folds into the GS beta-grasp domain. Residues 37–66 (ARTLPGPVDDPAKLPKWNYDGSSTDQAPGD) form a disordered region. In terms of domain architecture, GS catalytic spans 106–356 (KRYDAAKIFS…IAETTILWKP (251 aa)).

It belongs to the glutamine synthetase family. In terms of assembly, homooctamer. In terms of tissue distribution, roots.

It localises to the cytoplasm. It catalyses the reaction L-glutamate + NH4(+) + ATP = L-glutamine + ADP + phosphate + H(+). In Phaseolus vulgaris (Kidney bean), this protein is Glutamine synthetase PR-2.